The primary structure comprises 299 residues: Tyrosine recombinase XerC (299 aa).

The Core-binding (CB) domain occupies 1–85; that stretch reads MERQLEAYCA…AVRGLYRYLN (85 aa). A Tyr recombinase domain is found at 106–285; sequence RLPKTLDTDR…DFQHLAAVYD (180 aa). Catalysis depends on residues arginine 146, lysine 170, histidine 237, arginine 240, and histidine 263. The active-site O-(3'-phospho-DNA)-tyrosine intermediate is the tyrosine 272.

The protein belongs to the 'phage' integrase family. XerC subfamily. Forms a cyclic heterotetrameric complex composed of two molecules of XerC and two molecules of XerD.

The protein resides in the cytoplasm. Site-specific tyrosine recombinase, which acts by catalyzing the cutting and rejoining of the recombining DNA molecules. The XerC-XerD complex is essential to convert dimers of the bacterial chromosome into monomers to permit their segregation at cell division. It also contributes to the segregational stability of plasmids. The chain is Tyrosine recombinase XerC from Pseudomonas entomophila (strain L48).